Consider the following 407-residue polypeptide: Transcriptional regulator UL34 (407 aa).

Disordered regions lie at residues 268 to 330 and 388 to 407; these read AAGP…EELF and SPSVTPALTPVTSPITPLCI. Over residues 273–286 the composition is skewed to acidic residues; that stretch reads EADENNDEGEEDDD. Over residues 287 to 301 the composition is skewed to basic and acidic residues; it reads ELRHSDPAPLHESKK. Basic residues predominate over residues 302 to 312; that stretch reads PRNARRPRTRV.

Belongs to the HHV-5 UL34 protein family.

It localises to the host nucleus. In terms of biological role, acts as a transcriptional repressor of the US3 gene expression through a specific DNA sequence named the transcriptional repressive element (tre). The polypeptide is Transcriptional regulator UL34 (UL34) (Human cytomegalovirus (strain Towne) (HHV-5)).